The chain runs to 99 residues: Prostate and testis expressed protein 14 (99 aa).

The signal sequence occupies residues 1 to 21 (MEKYLLLLLLGIFLRVGFLQA). One can recognise a UPAR/Ly6 domain in the interval 22-99 (LTCVSCGRLN…CDHQNLCNKP (78 aa)). 5 disulfide bridges follow: Cys24/Cys51, Cys27/Cys36, Cys43/Cys69, Cys73/Cys89, and Cys90/Cys96. A glycan (N-linked (GlcNAc...) asparagine) is linked at Asn31. N-linked (GlcNAc...) asparagine glycosylation is present at Asn75.

The protein belongs to the PATE family. In terms of assembly, monomer. Glycosylated. Predominantly expressed in the seminal vesicles. Expressed in prostate, and to a lesser extent in the cauda epididymis.

The protein resides in the secreted. This is Prostate and testis expressed protein 14 from Mus musculus (Mouse).